Reading from the N-terminus, the 233-residue chain is Snake venom serine protease BthaTL (233 aa).

In terms of domain architecture, Peptidase S1 spans 1–224 (VIGGDECDIN…YLPWIQSIIA (224 aa)). Intrachain disulfides connect cysteine 7-cysteine 138, cysteine 25-cysteine 41, cysteine 73-cysteine 231, cysteine 117-cysteine 185, cysteine 149-cysteine 164, and cysteine 175-cysteine 200. Active-site charge relay system residues include histidine 40 and aspartate 85. The active-site Charge relay system is the serine 179.

This sequence belongs to the peptidase S1 family. Snake venom subfamily. In terms of assembly, monomer. Expressed by the venom gland.

The protein resides in the secreted. Its function is as follows. Snake venom serine protease that may act in the hemostasis system of the prey. This Bothrops alternatus (Urutu) protein is Snake venom serine protease BthaTL.